The chain runs to 597 residues: Kelch-like protein 21 (597 aa).

The region spanning 35 to 103 (LDVTLEAAGG…SYTGRVAVSG (69 aa)) is the BTB domain. One can recognise a BACK domain in the interval 138–239 (CLDMQDFAEA…RRFYLLAHVE (102 aa)). Kelch repeat units lie at residues 287–335 (ILVL…ALGN), 336–382 (DIYV…VLNG), 384–422 (LYVV…ACRG), 423–470 (RLYA…TLNG), 472–512 (MYFV…ALGG), and 513–560 (KLYV…SIFR). A disordered region spans residues 570-597 (GRGFELNSGSSDVDAGHHRLPQNPEELQ).

In terms of assembly, component of the BCR(KLHL21) E3 ubiquitin ligase complex, at least composed of CUL3, KLHL21 and RBX1.

It localises to the cytoplasm. The protein localises to the cytoskeleton. It is found in the spindle. The protein operates within protein modification; protein ubiquitination. In terms of biological role, substrate-specific adapter of BCR (BTB-CUL3-RBX1) E3 ubiquitin-protein ligase complex required for efficient chromosome alignment and cytokinesis. The BCR(KLHL21) E3 ubiquitin ligase complex regulates localization of the chromosomal passenger complex (CPC) from chromosomes to the spindle midzone in anaphase and mediates the ubiquitination of AURKB. Ubiquitination of AURKB by BCR(KLHL21) E3 ubiquitin ligase complex may not lead to its degradation by the proteasome. In Rattus norvegicus (Rat), this protein is Kelch-like protein 21 (Klhl21).